Consider the following 254-residue polypeptide: Capsid protein (254 aa).

The span at 1-12 (MRKYTRNTYTMS) shows a compositional bias: polar residues. Positions 1–38 (MRKYTRNTYTMSQKRKVNPQSAWPKKRRTSTTSRKYQW) are disordered. The Bipartite nuclear localization signal motif lies at 10–35 (TMSQKRKVNPQSAWPKKRRTSTTSRK).

Belongs to the geminiviridae capsid protein family. As to quaternary structure, homomultimer. Binds to single-stranded and double-stranded viral DNA. Interacts (via nuclear localization signal) with host importin alpha-1a.

The protein localises to the virion. It localises to the host nucleus. Its function is as follows. Encapsidates the viral genome into characteristic twinned ('geminate') particles. Binds the genomic viral ssDNA and shuttles it into and out of the cell nucleus. Plays a role in protection of the genome from degradation, virus acquisition and transmission by insect vectors, infectivity, and systemic movement. The CP of monopartite geminiviruses is absolutely essential for virus movement. The protein is Capsid protein of Beet curly top virus (strain California/Logan) (BCTV).